Reading from the N-terminus, the 225-residue chain is Putative N-acetylmannosamine-6-phosphate 2-epimerase (225 aa).

This sequence belongs to the NanE family.

The enzyme catalyses an N-acyl-D-glucosamine 6-phosphate = an N-acyl-D-mannosamine 6-phosphate. The protein operates within amino-sugar metabolism; N-acetylneuraminate degradation; D-fructose 6-phosphate from N-acetylneuraminate: step 3/5. Functionally, converts N-acetylmannosamine-6-phosphate (ManNAc-6-P) to N-acetylglucosamine-6-phosphate (GlcNAc-6-P). The protein is Putative N-acetylmannosamine-6-phosphate 2-epimerase of Vibrio vulnificus (strain CMCP6).